Here is a 316-residue protein sequence, read N- to C-terminus: Epiphycan (316 aa).

An N-terminal signal peptide occupies residues 1–23 (MKTFVNIFLGFFIFESVGAVPIT). An O-linked (Xyl...) (dermatan sulfate) serine glycan is attached at serine 98. The LRRNT domain maps to 100–137 (VLVPQTQDGLPTCLLCTCLGTTVYCDDRELDAVPPLPK). Cysteine 112 and cysteine 124 are disulfide-bonded. LRR repeat units follow at residues 138 to 159 (NTMYFYSRYNRIRKINKNDFAN), 162 to 183 (NLKRIDLTANLISEIHEDAFRR), 186 to 207 (QLLELVLRDNRIRQLPELPSTL), 232 to 252 (ELQHLYITDNNLDHVPLPLPE), 253 to 274 (SLQALHLQNNNIQEMHEDTFCK), and 284 to 304 (ALEDIRLDGNPINLSKTPYAY). Residues cysteine 273 and cysteine 306 are joined by a disulfide bond. A glycan (N-linked (GlcNAc...) asparagine) is linked at asparagine 296.

This sequence belongs to the small leucine-rich proteoglycan (SLRP) family. SLRP class III subfamily. Post-translationally, the O-linked glycosaminoglycan chain(s) are dermatan sulfate. In terms of tissue distribution, preferentially expressed in flattened chondrocytes of developing chick limb cartilage. Also found in the cartilage peripheral zone bordering with bone marrow cavity.

The protein localises to the secreted. It is found in the extracellular space. It localises to the extracellular matrix. May have a role in bone formation and also in establishing the ordered structure of cartilage through matrix organization. The polypeptide is Epiphycan (EPYC) (Gallus gallus (Chicken)).